We begin with the raw amino-acid sequence, 2178 residues long: Genome polyprotein (2178 aa).

Residues 1 to 20 are disordered; that stretch reads MGAQVSTQKSGSHENQNILT. Gly-2 carries N-myristoyl glycine; by host lipidation. At 2–1490 the chain is on the cytoplasmic side; it reads GAQVSTQKSG…AVNQASMIIN (1489 aa). The tract at residues 564-584 is amphipathic alpha-helix; the sequence is ALTEGLSDELEEVIVEKTKQT. Residues His-875 and Asp-893 each act as for protease 2A activity in the active site. Positions 910 and 912 each coordinate Zn(2+). Cys-964 serves as the catalytic For protease 2A activity. Positions 970 and 972 each coordinate Zn(2+). Residues 1100 to 1172 form a membrane-binding region; sequence NDGWFRKFND…HDSNPTQEKR (73 aa). The interval 1100–1238 is oligomerization; sequence NDGWFRKFND…TPGSGKSLTT (139 aa). The RNA-binding stretch occupies residues 1121-1125; the sequence is ANKIS. Positions 1204 to 1360 constitute an SF3 helicase domain; sequence KNKITNYMQF…STYTKNGKLN (157 aa). Residues Cys-1368, Cys-1371, Cys-1380, and Cys-1385 each coordinate Zn(2+). A C4-type zinc finger spans residues 1368-1385; the sequence is CKDCHQPSNFKKCCPLVC. Residues 1412–1419 are RNA-binding; it reads DYKNKVKI. Positions 1423–1428 are oligomerization; sequence LEVLFQ. Residues 1491–1506 lie within the membrane without spanning it; sequence TILMFVSTLGIVYVIY. The Cytoplasmic segment spans residues 1507–2178; that stretch reads KLFAQTQGPY…VLRRRWLDLF (672 aa). Residue Tyr-1516 is modified to O-(5'-phospho-RNA)-tyrosine. Residues 1537 to 1714 enclose the Peptidase C3 domain; the sequence is GPNTEFALSL…FSAQLKKQYF (178 aa). Active-site for protease 3C activity residues include His-1576, Glu-1607, and Cys-1682. The RdRp catalytic domain maps to 1946–2059; that stretch reads HLMAFDYSNF…SYPFELDSNI (114 aa). Asp-1951 and Asp-2045 together coordinate Mg(2+).

It belongs to the picornaviruses polyprotein family. In terms of assembly, interacts with capsid protein VP1 and capsid protein VP3 to form heterotrimeric protomers. As to quaternary structure, interacts with capsid protein VP0, and capsid protein VP3 to form heterotrimeric protomers. Five protomers subsequently associate to form pentamers which serve as building blocks for the capsid. Interacts with capsid protein VP2, capsid protein VP3 and capsid protein VP4 following cleavage of capsid protein VP0. Interacts with capsid protein VP1 and capsid protein VP3 in the mature capsid. In terms of assembly, interacts with capsid protein VP0 and capsid protein VP1 to form heterotrimeric protomers. Five protomers subsequently associate to form pentamers which serve as building blocks for the capsid. Interacts with capsid protein VP4 in the mature capsid. Interacts with protein 2C; this interaction may be important for virion morphogenesis. As to quaternary structure, interacts with capsid protein VP1 and capsid protein VP3. Homodimer. In terms of assembly, homohexamer; forms a hexameric ring structure with 6-fold symmetry characteristic of AAA+ ATPases. Interacts (via N-terminus) with host RTN3 (via reticulon domain); this interaction is important for viral replication. Interacts with capsid protein VP3; this interaction may be important for virion morphogenesis. As to quaternary structure, interacts with protein 3CD. Homodimer. Interacts with host GBF1. Interacts (via GOLD domain) with host ACBD3 (via GOLD domain); this interaction allows the formation of a viral protein 3A/ACBD3 heterotetramer with a 2:2 stoichiometry, which will stimulate the recruitment of host PI4KB in order to synthesize PI4P at the viral RNA replication sites. In terms of assembly, interacts with RNA-directed RNA polymerase. As to quaternary structure, interacts with protein 3AB and with RNA-directed RNA polymerase. Interacts with Viral protein genome-linked and with protein 3CD. Mg(2+) serves as cofactor. In terms of processing, specific enzymatic cleavages in vivo by the viral proteases yield processing intermediates and the mature proteins. Myristoylation is required for the formation of pentamers during virus assembly. Further assembly of 12 pentamers and a molecule of genomic RNA generates the provirion. Post-translationally, during virion maturation, immature virions are rendered infectious following cleavage of VP0 into VP4 and VP2. This maturation seems to be an autocatalytic event triggered by the presence of RNA in the capsid and it is followed by a conformational change infectious virion. In terms of processing, myristoylation is required during RNA encapsidation and formation of the mature virus particle. VPg is uridylylated by the polymerase into VPg-pUpU. This acts as a nucleotide-peptide primer for the genomic RNA replication.

It is found in the virion. The protein localises to the host cytoplasm. Its subcellular location is the host cytoplasmic vesicle membrane. It localises to the host nucleus. The catalysed reaction is a ribonucleoside 5'-triphosphate + H2O = a ribonucleoside 5'-diphosphate + phosphate + H(+). It catalyses the reaction Selective cleavage of Tyr-|-Gly bond in the picornavirus polyprotein.. The enzyme catalyses RNA(n) + a ribonucleoside 5'-triphosphate = RNA(n+1) + diphosphate. It carries out the reaction Selective cleavage of Gln-|-Gly bond in the poliovirus polyprotein. In other picornavirus reactions Glu may be substituted for Gln, and Ser or Thr for Gly.. Replication or transcription is subject to high level of random mutations by the nucleotide analog ribavirin. Its function is as follows. Forms an icosahedral capsid of pseudo T=3 symmetry with capsid proteins VP2 and VP3. The capsid is 300 Angstroms in diameter, composed of 60 copies of each capsid protein and enclosing the viral positive strand RNA genome. Capsid protein VP1 mainly forms the vertices of the capsid. Capsid protein VP1 interacts with host cell receptor to provide virion attachment to target host cells. This attachment induces virion internalization. Tyrosine kinases are probably involved in the entry process. After binding to its receptor, the capsid undergoes conformational changes. Capsid protein VP1 N-terminus (that contains an amphipathic alpha-helix) and capsid protein VP4 are externalized. Together, they shape a pore in the host membrane through which viral genome is translocated to host cell cytoplasm. In terms of biological role, forms an icosahedral capsid of pseudo T=3 symmetry with capsid proteins VP2 and VP3. The capsid is 300 Angstroms in diameter, composed of 60 copies of each capsid protein and enclosing the viral positive strand RNA genome. Functionally, lies on the inner surface of the capsid shell. After binding to the host receptor, the capsid undergoes conformational changes. Capsid protein VP4 is released, Capsid protein VP1 N-terminus is externalized, and together, they shape a pore in the host membrane through which the viral genome is translocated into the host cell cytoplasm. Component of immature procapsids, which is cleaved into capsid proteins VP4 and VP2 after maturation. Allows the capsid to remain inactive before the maturation step. Its function is as follows. Cysteine protease that cleaves viral polyprotein and specific host proteins. It is responsible for the autocatalytic cleavage between the P1 and P2 regions, which is the first cleavage occurring in the polyprotein. Also cleaves the host translation initiation factor EIF4G1, in order to shut down the capped cellular mRNA translation. Inhibits the host nucleus-cytoplasm protein and RNA trafficking by cleaving host members of the nuclear pores. Counteracts stress granule formation probably by antagonizing its assembly or promoting its dissassembly. In terms of biological role, plays an essential role in the virus replication cycle by acting as a viroporin. Creates a pore in the host endoplasmic reticulum and as a consequence releases Ca2+ in the cytoplasm of infected cell. In turn, high levels of cytoplasmic calcium may trigger membrane trafficking and transport of viral ER-associated proteins to viroplasms, sites of viral genome replication. Functionally, induces and associates with structural rearrangements of intracellular membranes. Displays RNA-binding, nucleotide binding and NTPase activities. May play a role in virion morphogenesis and viral RNA encapsidation by interacting with the capsid protein VP3. Localizes the viral replication complex to the surface of membranous vesicles. Together with protein 3CD binds the Cis-Active RNA Element (CRE) which is involved in RNA synthesis initiation. Acts as a cofactor to stimulate the activity of 3D polymerase, maybe through a nucleid acid chaperone activity. Its function is as follows. Localizes the viral replication complex to the surface of membranous vesicles. It inhibits host cell endoplasmic reticulum-to-Golgi apparatus transport and causes the disassembly of the Golgi complex, possibly through GBF1 interaction. This would result in depletion of MHC, trail receptors and IFN receptors at the host cell surface. Plays an essential role in viral RNA replication by recruiting ACBD3 and PI4KB at the viral replication sites, thereby allowing the formation of the rearranged membranous structures where viral replication takes place. In terms of biological role, acts as a primer for viral RNA replication and remains covalently bound to viral genomic RNA. VPg is uridylylated prior to priming replication into VPg-pUpU. The oriI viral genomic sequence may act as a template for this. The VPg-pUpU is then used as primer on the genomic RNA poly(A) by the RNA-dependent RNA polymerase to replicate the viral genome. During genome replication, the VPg-RNA linkage is removed by the host TDP2, thereby accelerating replication. During the late stage of the replication cycle, host TDP2 is excluded from sites of viral RNA synthesis and encapsidation, allowing for the generation of progeny virions. Functionally, involved in the viral replication complex and viral polypeptide maturation. It exhibits protease activity with a specificity and catalytic efficiency that is different from protease 3C. Protein 3CD lacks polymerase activity. Protein 3CD binds to the 5'UTR of the viral genome. Replicates the viral genomic RNA on the surface of intracellular membranes. May form linear arrays of subunits that propagate along a strong head-to-tail interaction called interface-I. Covalently attaches UMP to a tyrosine of VPg, which is used to prime RNA synthesis. The positive stranded RNA genome is first replicated at virus induced membranous vesicles, creating a dsRNA genomic replication form. This dsRNA is then used as template to synthesize positive stranded RNA genomes. ss(+)RNA genomes are either translated, replicated or encapsidated. Its function is as follows. Major viral protease that mediates proteolytic processing of the polyprotein. Cleaves host EIF5B, contributing to host translation shutoff. Also cleaves host PABPC1, contributing to host translation shutoff. Cleaves host NLRP1, triggers host N-glycine-mediated degradation of the autoinhibitory NLRP1 N-terminal fragment. The protein is Genome polyprotein of Homo sapiens (Human).